The chain runs to 492 residues: Catalase-1 (492 aa).

Active-site residues include histidine 65 and asparagine 138. Position 348 (tyrosine 348) interacts with heme.

This sequence belongs to the catalase family. Homotetramer and heterotetramer. At least six or seven isozymes are produced from a mixture of 3 gene products. Interacts with NCA1. Interacts with LSD1. Heme is required as a cofactor.

It is found in the cytoplasm. The enzyme catalyses 2 H2O2 = O2 + 2 H2O. Its function is as follows. Occurs in almost all aerobically respiring organisms and serves to protect cells from the toxic effects of hydrogen peroxide. The chain is Catalase-1 (CAT1) from Arabidopsis thaliana (Mouse-ear cress).